The chain runs to 1722 residues: Signal-induced proliferation-associated 1-like protein 2 (1722 aa).

The segment covering 1–12 (MSDPRQSQEEKH) has biased composition (basic and acidic residues). 2 disordered regions span residues 1 to 29 (MSDPRQSQEEKHKLGRASSKFKDPPRIMQ) and 42 to 72 (NGNMGPTTSLNASNSNETGGGGPANGTPAVP). A compositionally biased stretch (polar residues) spans 45 to 56 (MGPTTSLNASNS). Residue S148 is modified to Phosphoserine. Polar residues predominate over residues 360–377 (GASAASQTQMPTGQTGNC). Positions 360 to 401 (GASAASQTQMPTGQTGNCESPLGSKEDLNSKENLDADEGDGK) are disordered. Phosphoserine occurs at positions 379 and 383. The segment covering 383 to 401 (SKEDLNSKENLDADEGDGK) has biased composition (basic and acidic residues). One can recognise a Rap-GAP domain in the interval 595–812 (LLKLDEQGLS…RTRQEYLKDL (218 aa)). The PDZ domain maps to 950-1026 (EMTLRRNGLG…VKVVIIQPHD (77 aa)). S1029 carries the post-translational modification Phosphoserine. Disordered stretches follow at residues 1067-1245 (HRVP…FGSG) and 1330-1360 (EGSMGDLSEISSHSSGSHHSGSPSAHCSKSS). Composition is skewed to low complexity over residues 1093-1102 (QQLLQQAQAA) and 1119-1130 (SSPSNQSSSSDP). Composition is skewed to basic and acidic residues over residues 1164-1183 (DGAREREDTMEASRHPETKW) and 1194-1217 (YKERALQKDGSCKDSPNKLSHIGD). Residues 1219–1236 (SCSSHSSSNTLSSNTSSN) are compositionally biased toward low complexity. At S1244 the chain carries Phosphoserine. The span at 1337–1360 (SEISSHSSGSHHSGSPSAHCSKSS) shows a compositional bias: low complexity. Phosphoserine occurs at positions 1461, 1472, 1478, 1488, 1549, 1552, and 1591. Residues 1654–1712 (LTGKVNQLELILRQLQTDLRKEKQDKAVLQAEVQHLRQDNMRLQEESQTATAQLRKFTE) are a coiled coil.

The chain is Signal-induced proliferation-associated 1-like protein 2 (SIPA1L2) from Homo sapiens (Human).